A 79-amino-acid chain; its full sequence is MENIEQRVKKIVAEQLGVNESEIKTESSFVDDLGADSLDTVELVMALEEEFECEIPDEEAEKITTVQQAIDYVTAHLKK.

The Carrier domain maps to 2 to 77 (ENIEQRVKKI…QAIDYVTAHL (76 aa)). Serine 37 carries the O-(pantetheine 4'-phosphoryl)serine modification.

The protein belongs to the acyl carrier protein (ACP) family. 4'-phosphopantetheine is transferred from CoA to a specific serine of apo-ACP by AcpS. This modification is essential for activity because fatty acids are bound in thioester linkage to the sulfhydryl of the prosthetic group.

Its subcellular location is the cytoplasm. It functions in the pathway lipid metabolism; fatty acid biosynthesis. Its function is as follows. Carrier of the growing fatty acid chain in fatty acid biosynthesis. In Aromatoleum aromaticum (strain DSM 19018 / LMG 30748 / EbN1) (Azoarcus sp. (strain EbN1)), this protein is Acyl carrier protein.